We begin with the raw amino-acid sequence, 618 residues long: 1-deoxy-D-xylulose-5-phosphate synthase (618 aa).

Thiamine diphosphate contacts are provided by residues His77 and 118-120; that span reads GHS. Asp149 provides a ligand contact to Mg(2+). Residues 150–151, Asn178, Tyr285, and Glu367 contribute to the thiamine diphosphate site; that span reads GA. Residue Asn178 coordinates Mg(2+).

This sequence belongs to the transketolase family. DXPS subfamily. In terms of assembly, homodimer. Requires Mg(2+) as cofactor. It depends on thiamine diphosphate as a cofactor.

The enzyme catalyses D-glyceraldehyde 3-phosphate + pyruvate + H(+) = 1-deoxy-D-xylulose 5-phosphate + CO2. It functions in the pathway metabolic intermediate biosynthesis; 1-deoxy-D-xylulose 5-phosphate biosynthesis; 1-deoxy-D-xylulose 5-phosphate from D-glyceraldehyde 3-phosphate and pyruvate: step 1/1. In terms of biological role, catalyzes the acyloin condensation reaction between C atoms 2 and 3 of pyruvate and glyceraldehyde 3-phosphate to yield 1-deoxy-D-xylulose-5-phosphate (DXP). The sequence is that of 1-deoxy-D-xylulose-5-phosphate synthase from Idiomarina loihiensis (strain ATCC BAA-735 / DSM 15497 / L2-TR).